A 470-amino-acid chain; its full sequence is Mucin-like protein 3 (470 aa).

The N-terminal stretch at 1-29 (MAQMTSGLYPMFGFFICLLFLPASWEAGA) is a signal peptide. Over 30-401 (NTFQELQKTG…EGSNSFPAWA (372 aa)) the chain is Extracellular. Disordered stretches follow at residues 57–234 (RALS…HTIP) and 248–318 (TKEA…KAPE). The span at 75 to 87 (STATQKPKRQCNT) shows a compositional bias: polar residues. N-linked (GlcNAc...) asparagine glycosylation occurs at Asn-122. Residues 132–152 (ARNERSADDHGSTNSEKRSDG) are compositionally biased toward basic and acidic residues. The span at 169 to 193 (TRTSGTPVSSTETSTKLRTTSQKPE) shows a compositional bias: polar residues. Residues 194–203 (TSSHDSDLIR) show a composition bias toward basic and acidic residues. Residues 204–222 (KSTSLPVKSTEVSRTSYRT) are compositionally biased toward polar residues. Basic and acidic residues predominate over residues 260-273 (KYERETRSASERIS). The segment covering 283–295 (HTPSAGETTTQVS) has biased composition (polar residues). An N-linked (GlcNAc...) asparagine glycan is attached at Asn-325. The chain crosses the membrane as a helical span at residues 402 to 422 (IVVVILMAVIILLIFLGLIFL). The Cytoplasmic segment spans residues 423–470 (VSCASRARHQLTQNSEDAEPEDKGGRNSYPVYLMEQQNLNLNQISSPP).

It is found in the cell membrane. It localises to the cytoplasm. In terms of biological role, may modulate NF-kappaB signaling and play a role in cell growth. The protein is Mucin-like protein 3 of Rattus norvegicus (Rat).